Here is a 239-residue protein sequence, read N- to C-terminus: Myogenic factor 6 (239 aa).

The tract at residues 28-59 is disordered; it reads PGVSPLYEGNDSPLSPGQDPVPSETGCESSGE. The 52-residue stretch at 92–143 folds into the bHLH domain; the sequence is DRRKAATLRERRRLKKINEAFDALKKKTVPNPNQRLPKVEILRSAINYIEKL. Residues 182–196 are compositionally biased toward polar residues; it reads CQSWQENPDHSSSQM. The segment at 182-239 is disordered; sequence CQSWQENPDHSSSQMAGHREGAVLESSESSSLRRLSSIVDSISTEEPKARCPSQISEK. Residues 204-223 are compositionally biased toward low complexity; sequence VLESSESSSLRRLSSIVDSI.

In terms of assembly, efficient DNA binding requires dimerization with another bHLH protein.

It localises to the nucleus. Involved in muscle differentiation (myogenic factor). Induces fibroblasts to differentiate into myoblasts. Probable sequence specific DNA-binding protein. In Danio rerio (Zebrafish), this protein is Myogenic factor 6 (myf6).